A 46-amino-acid polypeptide reads, in one-letter code: Defensin-like protein AX2 (46 aa).

4 disulfide bridges follow: cysteine 3/cysteine 46, cysteine 14/cysteine 34, cysteine 20/cysteine 40, and cysteine 24/cysteine 42.

As to expression, leaves and flowers.

In terms of biological role, strong inhibiting activity against C.beticola and other filamentous fungi. Little or no effect against bacteria. This chain is Defensin-like protein AX2, found in Beta vulgaris (Sugar beet).